The following is a 178-amino-acid chain: Large ribosomal subunit protein uL10 (178 aa).

It belongs to the universal ribosomal protein uL10 family. Part of the ribosomal stalk of the 50S ribosomal subunit. The N-terminus interacts with L11 and the large rRNA to form the base of the stalk. The C-terminus forms an elongated spine to which L12 dimers bind in a sequential fashion forming a multimeric L10(L12)X complex.

Functionally, forms part of the ribosomal stalk, playing a central role in the interaction of the ribosome with GTP-bound translation factors. This is Large ribosomal subunit protein uL10 from Stenotrophomonas maltophilia (strain R551-3).